A 393-amino-acid polypeptide reads, in one-letter code: Protein TBATA (393 aa).

Disordered regions lie at residues 1 to 39, 168 to 188, 202 to 264, and 340 to 393; these read MTTE…VGLQ, VPIG…DTWR, TKEI…DGGV, and EPQE…KAES. The span at 20–34 shows a compositional bias: basic and acidic residues; that stretch reads PQPETKPENLPRSHG. Over residues 173–185 the composition is skewed to polar residues; sequence PQSNRNPQLSTSD. Composition is skewed to basic and acidic residues over residues 205–227 and 380–393; these read IQPK…REQG and PSED…KAES.

Belongs to the TBATA family. As to quaternary structure, interacts with KIF17. Interacts with UBA3. Expressed in the subcapsular region of the thymus and lymph node (at protein level). Highly expressed in thymic cortical stromal cells and testis. Lower levels found in brain cortex, hippocampus, kidney, cerebellum, skeletal muscle, epididymis and ovary. No expression detected in other lymphoid organs including bone marrow and spleen. Isoform 1 and isoform 2 are expressed predominantly in testis. Isoform 3, isoform 4 and isoform 5 are expressed predominantly in thymus although isoform 3 is also expressed in testis. In the CNS, highly expressed in restricted areas, the cerebellum and hippocampus.

The protein resides in the cytoplasm. The protein localises to the cytosol. It is found in the nucleus. In terms of biological role, isoform 1 and isoform 2 may play a role in spermatid differentiation. Isoform 1 and isoform 2 regulate thymus function by modulating stromal cell proliferation via interference with the NEDD8 pathway. The protein is Protein TBATA (Tbata) of Mus musculus (Mouse).